Consider the following 521-residue polypeptide: MKEEIDAPVSTDASGTDLENARDQPSGEKPTAVDIYLVEWDGPNDPELPMNFPLWKKSLITCIFSTLTIWVTFSSSVFSAAAGITSKEFHVSVEVMTLGTSLTVLGFTVGPLVWGPMSELYGRLKPLYIGYAIFIIFQVPVAVAQNLETLMLARFFLGFFGTSALAIIPGALADFWGPVERAIAISLFSAATFVGPIFGPIMYVNTMITLVNGVWTRANHDMSSGGFIVDSSLGWRWTAWITMIPASFFGIIAFLTLPETYHPVLLQRRASRLRKETRIWAYHSRLDENTPTFGEILTKYLFRPIQMLFLEPILVCMTIYISLIYGILYLFFVAYPIAFREVRNWKSLGIAALPFLGILVGVLMGCLLVTIATRLWYAPKLQNGSVVPEDRLPPMIVAAILLPIGLFWFGWTSSPSISWAPQAIAGAPIGMGILMIWMQGLNYLIDVYLVVANSAMSANTLIRSAVSAAFPLFATAMYHKLGVDWATSLLGFLSIAMIPIPVIFYFYGAKIRALSRFSPKW.

The interval 1–29 (MKEEIDAPVSTDASGTDLENARDQPSGEK) is disordered. A run of 8 helical transmembrane segments spans residues 58–78 (SLIT…SSVF), 95–115 (VMTL…LVWG), 124–144 (LKPL…VAVA), 155–175 (FFLG…LADF), 182–202 (AIAI…GPIM), 237–257 (WTAW…FLTL), 313–333 (ILVC…LFFV), and 349–369 (GIAA…CLLV). N-linked (GlcNAc...) asparagine glycosylation is present at Asn383. The next 4 membrane-spanning stretches (helical) occupy residues 392-412 (LPPM…FGWT), 417-437 (ISWA…LMIW), 465-485 (AVSA…GVDW), and 489-509 (LLGF…FYGA).

It belongs to the major facilitator superfamily. CAR1 family.

Its subcellular location is the membrane. Functionally, MFS transporter; part of the gene cluster that mediates the biosynthesis the mycotoxin citrinin, a hepato-nephrotoxic compound to humans due to inhibition of respiration complex III. The polypeptide is Citrinin biosynthesis cluster MFS transporter ctnC (ctnC) (Monascus purpureus (Red mold)).